The primary structure comprises 247 residues: 1-(5-phosphoribosyl)-5-[(5-phosphoribosylamino)methylideneamino] imidazole-4-carboxamide isomerase (247 aa).

Catalysis depends on aspartate 16, which acts as the Proton acceptor. Aspartate 135 (proton donor) is an active-site residue.

It belongs to the HisA/HisF family.

Its subcellular location is the cytoplasm. It catalyses the reaction 1-(5-phospho-beta-D-ribosyl)-5-[(5-phospho-beta-D-ribosylamino)methylideneamino]imidazole-4-carboxamide = 5-[(5-phospho-1-deoxy-D-ribulos-1-ylimino)methylamino]-1-(5-phospho-beta-D-ribosyl)imidazole-4-carboxamide. It participates in amino-acid biosynthesis; L-histidine biosynthesis; L-histidine from 5-phospho-alpha-D-ribose 1-diphosphate: step 4/9. The protein is 1-(5-phosphoribosyl)-5-[(5-phosphoribosylamino)methylideneamino] imidazole-4-carboxamide isomerase of Paenarthrobacter aurescens (strain TC1).